The primary structure comprises 223 residues: Uridylate kinase (223 aa).

ATP is bound at residue 9–10 (GS). Position 43 (G43) interacts with UMP. ATP is bound by residues G44 and R48. Residues D65 and 112-118 (THPGHTT) each bind UMP. ATP contacts are provided by T137, N138, Y143, and D146.

This sequence belongs to the UMP kinase family. As to quaternary structure, homohexamer.

The protein localises to the cytoplasm. The enzyme catalyses UMP + ATP = UDP + ADP. Its pathway is pyrimidine metabolism; CTP biosynthesis via de novo pathway; UDP from UMP (UMPK route): step 1/1. Its activity is regulated as follows. Inhibited by UTP. Its function is as follows. Catalyzes the reversible phosphorylation of UMP to UDP. The chain is Uridylate kinase from Methanopyrus kandleri (strain AV19 / DSM 6324 / JCM 9639 / NBRC 100938).